The primary structure comprises 122 residues: Ribosomal silencing factor RsfS (122 aa).

Belongs to the Iojap/RsfS family. As to quaternary structure, interacts with ribosomal protein uL14 (rplN).

The protein resides in the cytoplasm. In terms of biological role, functions as a ribosomal silencing factor. Interacts with ribosomal protein uL14 (rplN), blocking formation of intersubunit bridge B8. Prevents association of the 30S and 50S ribosomal subunits and the formation of functional ribosomes, thus repressing translation. The chain is Ribosomal silencing factor RsfS from Chromobacterium violaceum (strain ATCC 12472 / DSM 30191 / JCM 1249 / CCUG 213 / NBRC 12614 / NCIMB 9131 / NCTC 9757 / MK).